A 212-amino-acid polypeptide reads, in one-letter code: Protein-L-isoaspartate O-methyltransferase (212 aa).

Residue Ser60 is part of the active site.

The protein belongs to the methyltransferase superfamily. L-isoaspartyl/D-aspartyl protein methyltransferase family.

The protein resides in the cytoplasm. The catalysed reaction is [protein]-L-isoaspartate + S-adenosyl-L-methionine = [protein]-L-isoaspartate alpha-methyl ester + S-adenosyl-L-homocysteine. Catalyzes the methyl esterification of L-isoaspartyl residues in peptides and proteins that result from spontaneous decomposition of normal L-aspartyl and L-asparaginyl residues. It plays a role in the repair and/or degradation of damaged proteins. The sequence is that of Protein-L-isoaspartate O-methyltransferase from Methanococcus maripaludis (strain C5 / ATCC BAA-1333).